We begin with the raw amino-acid sequence, 372 residues long: uncharacterized protein (372 aa).

The tract at residues 328–353 (KKGQPCKDEDAVTVPLPSSDPGKETQ) is disordered.

Its function is as follows. Induces the SOS system when expressed in E.coli, therefore, it may play a role in DNA metabolism and/or in genome stability. This is an uncharacterized protein from Saccharomyces cerevisiae (strain ATCC 204508 / S288c) (Baker's yeast).